Consider the following 235-residue polypeptide: Large ribosomal subunit protein uL1 (235 aa).

Belongs to the universal ribosomal protein uL1 family. As to quaternary structure, part of the 50S ribosomal subunit.

Its function is as follows. Binds directly to 23S rRNA. The L1 stalk is quite mobile in the ribosome, and is involved in E site tRNA release. Functionally, protein L1 is also a translational repressor protein, it controls the translation of the L11 operon by binding to its mRNA. This Fusobacterium nucleatum subsp. nucleatum (strain ATCC 25586 / DSM 15643 / BCRC 10681 / CIP 101130 / JCM 8532 / KCTC 2640 / LMG 13131 / VPI 4355) protein is Large ribosomal subunit protein uL1.